An 85-amino-acid polypeptide reads, in one-letter code: Small ribosomal subunit protein bS20 (85 aa).

The protein belongs to the bacterial ribosomal protein bS20 family.

Functionally, binds directly to 16S ribosomal RNA. The sequence is that of Small ribosomal subunit protein bS20 from Borrelia turicatae (strain 91E135).